Here is a 531-residue protein sequence, read N- to C-terminus: Polypyrimidine tract-binding protein 2 (531 aa).

M1 bears the N-acetylmethionine mark. A phosphoserine mark is found at S26 and S27. 2 RRM domains span residues 59 to 133 (RVLH…YSNH) and 181 to 257 (LRII…FSKL). Residue S308 is modified to Phosphoserine. 2 RRM domains span residues 338-412 (TVLL…LSKH) and 455-529 (ATLH…FSKS).

In terms of assembly, monomer. Interacts with NOVA1; the interaction is direct. Identified in a mRNP complex, at least composed of DHX9, DDX3X, ELAVL1, HNRNPU, IGF2BP1, ILF3, PABPC1, PCBP2, PTBP2, STAU1, STAU2, SYNCRIP and YBX1. Part of a ternary complex containing KHSRP and HNRPH1. Interacts with NOVA2; the interaction is direct. As to expression, mainly expressed in brain although also detected in other tissues like heart and skeletal muscle. Isoform 1 and isoform 2 are specifically expressed in neuronal tissues. Isoform 3 and isoform 4 are expressed in non-neuronal tissues. Isoform 5 and isoform 6 are truncated forms expressed in non-neuronal tissues.

Its subcellular location is the nucleus. Functionally, RNA-binding protein which binds to intronic polypyrimidine tracts and mediates negative regulation of exons splicing. May antagonize in a tissue-specific manner the ability of NOVA1 to activate exon selection. In addition to its function in pre-mRNA splicing, plays also a role in the regulation of translation. Reduced affinity for RNA. The sequence is that of Polypyrimidine tract-binding protein 2 from Homo sapiens (Human).